Consider the following 481-residue polypeptide: Protein JASON (481 aa).

Residues glutamate 226–glycine 250 are disordered. Residues serine 232–glycine 241 show a composition bias toward low complexity.

Its function is as follows. Required for normal spindle orientation at male meiosis II and normal formation of tetrad of microspores. Acts as a positive regulator of PS1 in male sporogenesis. Not involved in female meiosis. The polypeptide is Protein JASON (Arabidopsis thaliana (Mouse-ear cress)).